The following is a 445-amino-acid chain: 3-phosphoshikimate 1-carboxyvinyltransferase (445 aa).

The disordered stretch occupies residues 1-25; it reads MTDSNQPTPLQARKSGALHGTARVP. The 3-phosphoshikimate site is built by K28, S29, and R33. Phosphoenolpyruvate is bound at residue K28. The phosphoenolpyruvate site is built by G101 and R129. 4 residues coordinate 3-phosphoshikimate: S175, Q177, D328, and K355. Q177 provides a ligand contact to phosphoenolpyruvate. Catalysis depends on D328, which acts as the Proton acceptor. Phosphoenolpyruvate is bound by residues R359 and R402.

This sequence belongs to the EPSP synthase family. Monomer.

The protein localises to the cytoplasm. It carries out the reaction 3-phosphoshikimate + phosphoenolpyruvate = 5-O-(1-carboxyvinyl)-3-phosphoshikimate + phosphate. Its pathway is metabolic intermediate biosynthesis; chorismate biosynthesis; chorismate from D-erythrose 4-phosphate and phosphoenolpyruvate: step 6/7. Catalyzes the transfer of the enolpyruvyl moiety of phosphoenolpyruvate (PEP) to the 5-hydroxyl of shikimate-3-phosphate (S3P) to produce enolpyruvyl shikimate-3-phosphate and inorganic phosphate. This is 3-phosphoshikimate 1-carboxyvinyltransferase from Rhodopseudomonas palustris (strain TIE-1).